Consider the following 184-residue polypeptide: Probable archaeosortase E (184 aa).

A run of 4 helical transmembrane segments spans residues Ile-27–Phe-47, Val-86–Tyr-106, Ile-114–Ile-134, and Ile-151–Ile-171. Cys-90 functions as the Acyl-thioester intermediate in the catalytic mechanism. Arg-130 (proton donor) is an active-site residue.

Belongs to the exosortase/archaeosortase family. Archaeosortase E subfamily.

The protein resides in the cell membrane. Functionally, transpeptidase that recognizes and modifies its substrate by proteolytic cleavage of a sorting signal. Following cleavage, a covalent intermediate is formed via a thioester bond between the archaeosortase and its substrate, which is then transferred and covalently attached to the cell membrane. This chain is Probable archaeosortase E, found in Methanocaldococcus jannaschii (strain ATCC 43067 / DSM 2661 / JAL-1 / JCM 10045 / NBRC 100440) (Methanococcus jannaschii).